A 265-amino-acid polypeptide reads, in one-letter code: Orotidine 5'-phosphate decarboxylase (265 aa).

Substrate is bound by residues Asp38, 60 to 62 (KTH), 91 to 100 (DRKFADIGNT), Tyr213, and Arg232. Catalysis depends on Lys93, which acts as the Proton donor.

This sequence belongs to the OMP decarboxylase family.

It catalyses the reaction orotidine 5'-phosphate + H(+) = UMP + CO2. It participates in pyrimidine metabolism; UMP biosynthesis via de novo pathway; UMP from orotate: step 2/2. This is Orotidine 5'-phosphate decarboxylase (pyrG) from Mucor circinelloides f. lusitanicus (Mucor racemosus var. lusitanicus).